The following is a 265-amino-acid chain: DNA repair protein RecO (265 aa).

Belongs to the RecO family.

In terms of biological role, involved in DNA repair and RecF pathway recombination. In Mycobacterium marinum (strain ATCC BAA-535 / M), this protein is DNA repair protein RecO.